The following is a 384-amino-acid chain: Cytochrome b (384 aa).

Transmembrane regions (helical) follow at residues 32–52 (VGSL…FLAM), 76–98 (WLIR…LHIG), 113–133 (LWVI…MGYC), and 179–199 (FFAL…MHLM). Heme b-binding residues include H82 and H96. 2 residues coordinate heme b: H183 and H197. A ubiquinone is bound at residue H202. Transmembrane regions (helical) follow at residues 225 to 245 (FIFK…LFVF), 289 to 309 (LGGV…PYTD), 321 to 341 (LSKF…NLGQ), and 348 to 368 (YIEL…LIVP).

This sequence belongs to the cytochrome b family. In terms of assembly, fungal cytochrome b-c1 complex contains 10 subunits; 3 respiratory subunits, 2 core proteins and 5 low-molecular weight proteins. Cytochrome b-c1 complex is a homodimer. The cofactor is heme b.

Its subcellular location is the mitochondrion inner membrane. In terms of biological role, component of the ubiquinol-cytochrome c reductase complex (complex III or cytochrome b-c1 complex) that is part of the mitochondrial respiratory chain. The b-c1 complex mediates electron transfer from ubiquinol to cytochrome c. Contributes to the generation of a proton gradient across the mitochondrial membrane that is then used for ATP synthesis. The chain is Cytochrome b (COB) from Candida parapsilosis (Yeast).